The chain runs to 562 residues: Probable Xaa-Pro aminopeptidase PEPP (562 aa).

Asp358, Asp369, Glu492, and Glu532 together coordinate Mn(2+).

The protein belongs to the peptidase M24B family. The cofactor is Mn(2+).

It carries out the reaction Release of any N-terminal amino acid, including proline, that is linked to proline, even from a dipeptide or tripeptide.. Its function is as follows. Catalyzes the removal of a penultimate prolyl residue from the N-termini of peptides. This chain is Probable Xaa-Pro aminopeptidase PEPP (PEPP), found in Leptosphaeria maculans (strain JN3 / isolate v23.1.3 / race Av1-4-5-6-7-8) (Blackleg fungus).